The chain runs to 264 residues: Large ribosomal subunit protein uL2 (264 aa).

It belongs to the universal ribosomal protein uL2 family.

The protein resides in the cytoplasm. This is Large ribosomal subunit protein uL2 (RPL8) from Tetrahymena thermophila (strain SB210).